A 465-amino-acid chain; its full sequence is Probable Xaa-Pro aminopeptidase pepP (465 aa).

Residues aspartate 263, aspartate 274, glutamate 397, and glutamate 437 each contribute to the Mn(2+) site.

The protein belongs to the peptidase M24B family. The cofactor is Mn(2+).

The catalysed reaction is Release of any N-terminal amino acid, including proline, that is linked to proline, even from a dipeptide or tripeptide.. In terms of biological role, catalyzes the removal of a penultimate prolyl residue from the N-termini of peptides. The sequence is that of Probable Xaa-Pro aminopeptidase pepP (pepP) from Penicillium rubens (strain ATCC 28089 / DSM 1075 / NRRL 1951 / Wisconsin 54-1255) (Penicillium chrysogenum).